A 156-amino-acid polypeptide reads, in one-letter code: MNIKKNLMKIDIQNVCKKNIFFPKKKYFFLWLKNIFKNKKIEITIRIVDMLEMKFLNKKYKKKNSLTNVLSFQSPDSIKIKHRFLNYIGDIILCAPYINKEANILKKKKIELWAHMTIHSTLHLLHYSHKDSKSKKNMQKTEIYIMKKLGYNNPYN.

Zn(2+) is bound by residues H119, H123, and H129.

Belongs to the endoribonuclease YbeY family. Requires Zn(2+) as cofactor.

Its subcellular location is the cytoplasm. Single strand-specific metallo-endoribonuclease involved in late-stage 70S ribosome quality control and in maturation of the 3' terminus of the 16S rRNA. This chain is Endoribonuclease YbeY, found in Buchnera aphidicola subsp. Cinara cedri (strain Cc).